We begin with the raw amino-acid sequence, 200 residues long: 3-isopropylmalate dehydratase small subunit (200 aa).

This sequence belongs to the LeuD family. LeuD type 1 subfamily. Heterodimer of LeuC and LeuD.

It catalyses the reaction (2R,3S)-3-isopropylmalate = (2S)-2-isopropylmalate. It functions in the pathway amino-acid biosynthesis; L-leucine biosynthesis; L-leucine from 3-methyl-2-oxobutanoate: step 2/4. Its function is as follows. Catalyzes the isomerization between 2-isopropylmalate and 3-isopropylmalate, via the formation of 2-isopropylmaleate. The chain is 3-isopropylmalate dehydratase small subunit from Campylobacter jejuni subsp. jejuni serotype O:6 (strain 81116 / NCTC 11828).